The sequence spans 87 residues: Small ribosomal subunit protein uS17 (87 aa).

Belongs to the universal ribosomal protein uS17 family. In terms of assembly, part of the 30S ribosomal subunit.

One of the primary rRNA binding proteins, it binds specifically to the 5'-end of 16S ribosomal RNA. In Geobacillus thermodenitrificans (strain NG80-2), this protein is Small ribosomal subunit protein uS17.